Here is a 319-residue protein sequence, read N- to C-terminus: Epoxyqueuosine reductase (319 aa).

The Proton donor role is filled by Asp146. Residues 188–220 enclose the 4Fe-4S ferredoxin-type domain; it reads ASLPADQPARSLCGHCQRCLPACPTAAITEPFV. [4Fe-4S] cluster contacts are provided by Cys200, Cys203, Cys206, Cys210, Cys226, Cys250, Cys253, and Cys257.

It belongs to the QueG family. As to quaternary structure, monomer. Requires cob(II)alamin as cofactor. [4Fe-4S] cluster serves as cofactor.

The protein localises to the cytoplasm. The catalysed reaction is epoxyqueuosine(34) in tRNA + AH2 = queuosine(34) in tRNA + A + H2O. It participates in tRNA modification; tRNA-queuosine biosynthesis. In terms of biological role, catalyzes the conversion of epoxyqueuosine (oQ) to queuosine (Q), which is a hypermodified base found in the wobble positions of tRNA(Asp), tRNA(Asn), tRNA(His) and tRNA(Tyr). This Synechococcus sp. (strain RCC307) protein is Epoxyqueuosine reductase.